The primary structure comprises 257 residues: Small ribosomal subunit protein uS2 (257 aa).

It belongs to the universal ribosomal protein uS2 family.

The polypeptide is Small ribosomal subunit protein uS2 (Ruegeria pomeroyi (strain ATCC 700808 / DSM 15171 / DSS-3) (Silicibacter pomeroyi)).